The primary structure comprises 156 residues: Small ribosomal subunit protein uS7 (156 aa).

It belongs to the universal ribosomal protein uS7 family. As to quaternary structure, part of the 30S ribosomal subunit. Contacts proteins S9 and S11.

In terms of biological role, one of the primary rRNA binding proteins, it binds directly to 16S rRNA where it nucleates assembly of the head domain of the 30S subunit. Is located at the subunit interface close to the decoding center, probably blocks exit of the E-site tRNA. In Syntrophotalea carbinolica (strain DSM 2380 / NBRC 103641 / GraBd1) (Pelobacter carbinolicus), this protein is Small ribosomal subunit protein uS7.